Consider the following 352-residue polypeptide: Chorismate synthase (352 aa).

R48 contacts NADP(+). Residues 125–127 (RSS), 238–239 (NA), G278, 293–297 (KPTSS), and R319 each bind FMN.

Belongs to the chorismate synthase family. Homotetramer. FMNH2 is required as a cofactor.

It catalyses the reaction 5-O-(1-carboxyvinyl)-3-phosphoshikimate = chorismate + phosphate. It functions in the pathway metabolic intermediate biosynthesis; chorismate biosynthesis; chorismate from D-erythrose 4-phosphate and phosphoenolpyruvate: step 7/7. Functionally, catalyzes the anti-1,4-elimination of the C-3 phosphate and the C-6 proR hydrogen from 5-enolpyruvylshikimate-3-phosphate (EPSP) to yield chorismate, which is the branch point compound that serves as the starting substrate for the three terminal pathways of aromatic amino acid biosynthesis. This reaction introduces a second double bond into the aromatic ring system. The protein is Chorismate synthase of Legionella pneumophila (strain Paris).